We begin with the raw amino-acid sequence, 143 residues long: Crossover junction endodeoxyribonuclease Hjc (143 aa).

Position 12 (Glu-12) interacts with Mg(2+). Ser-32 is a catalytic residue. Residues Asp-42 and Glu-55 each coordinate Mg(2+).

It belongs to the Holliday junction resolvase Hjc family. As to quaternary structure, homodimer. Interacts with PCNA subunit PCNA1. Requires Mg(2+) as cofactor.

The enzyme catalyses Endonucleolytic cleavage at a junction such as a reciprocal single-stranded crossover between two homologous DNA duplexes (Holliday junction).. Its activity is regulated as follows. Autoinhibits at very high concentrations, possibly because of extreme junction distortion. Inhibition (and activity at low concentrations of enzyme) is stimulated by dsDNA and Sso7d. Activity stimulated by PCNA subunit PCNA1. Functionally, a structure-specific endonuclease that resolves Holliday junction (HJ) intermediates during genetic recombination; may have some degree of sequence preference in a mobile junction. Cleaves 4-way DNA junctions introducing paired nicks in opposing strands, leaving a 5'-terminal phosphate and a 3'-terminal hydroxyl group that are subsequently ligated to produce recombinant products. Can cleave all 4 strands 3 bases 3' of the junction center. Cleaves both mobile and immobile junctions. Modifies the structure of the 4-way DNA junction, a model Holliday junction structure. The protein forms multiple complexes with 4-way DNA, suggesting more than 1 homodimer can bind to each junction. The polypeptide is Crossover junction endodeoxyribonuclease Hjc (Saccharolobus solfataricus (strain ATCC 35092 / DSM 1617 / JCM 11322 / P2) (Sulfolobus solfataricus)).